The following is a 668-amino-acid chain: UvrABC system protein B (668 aa).

The Helicase ATP-binding domain maps to 27-413 (AGVQAGHRFQ…STQVVEQIIR (387 aa)). 40 to 47 (GATGTGKT) provides a ligand contact to ATP. The Beta-hairpin signature appears at 93–116 (YYDYYQPEAYIPVTDTYIEKSASI). The 167-residue stretch at 430–596 (QVDDLYGEIR…PIVKKTSNAI (167 aa)) folds into the Helicase C-terminal domain. Positions 628 to 663 (PPLIQDLEAKMKAAAQELAFEEAARYRDQIKRLRDR) constitute a UVR domain.

This sequence belongs to the UvrB family. As to quaternary structure, forms a heterotetramer with UvrA during the search for lesions. Interacts with UvrC in an incision complex.

The protein localises to the cytoplasm. Functionally, the UvrABC repair system catalyzes the recognition and processing of DNA lesions. A damage recognition complex composed of 2 UvrA and 2 UvrB subunits scans DNA for abnormalities. Upon binding of the UvrA(2)B(2) complex to a putative damaged site, the DNA wraps around one UvrB monomer. DNA wrap is dependent on ATP binding by UvrB and probably causes local melting of the DNA helix, facilitating insertion of UvrB beta-hairpin between the DNA strands. Then UvrB probes one DNA strand for the presence of a lesion. If a lesion is found the UvrA subunits dissociate and the UvrB-DNA preincision complex is formed. This complex is subsequently bound by UvrC and the second UvrB is released. If no lesion is found, the DNA wraps around the other UvrB subunit that will check the other stand for damage. The protein is UvrABC system protein B of Thermosynechococcus vestitus (strain NIES-2133 / IAM M-273 / BP-1).